The following is a 195-amino-acid chain: Phosphoribosylglycinamide formyltransferase (195 aa).

Residue 12 to 14 (GSN) coordinates N(1)-(5-phospho-beta-D-ribosyl)glycinamide. Residues lysine 65, 90-93 (MRLI), and asparagine 107 contribute to the (6R)-10-formyltetrahydrofolate site. Histidine 109 functions as the Proton donor in the catalytic mechanism.

The protein belongs to the GART family.

The catalysed reaction is N(1)-(5-phospho-beta-D-ribosyl)glycinamide + (6R)-10-formyltetrahydrofolate = N(2)-formyl-N(1)-(5-phospho-beta-D-ribosyl)glycinamide + (6S)-5,6,7,8-tetrahydrofolate + H(+). The protein operates within purine metabolism; IMP biosynthesis via de novo pathway; N(2)-formyl-N(1)-(5-phospho-D-ribosyl)glycinamide from N(1)-(5-phospho-D-ribosyl)glycinamide (10-formyl THF route): step 1/1. Catalyzes the transfer of a formyl group from 10-formyltetrahydrofolate to 5-phospho-ribosyl-glycinamide (GAR), producing 5-phospho-ribosyl-N-formylglycinamide (FGAR) and tetrahydrofolate. In Bacillus subtilis (strain 168), this protein is Phosphoribosylglycinamide formyltransferase.